The following is a 396-amino-acid chain: ATP-dependent RNA helicase eIF4A (396 aa).

The Q motif signature appears at 22–50; it reads HKFDELKLKEVLLRGIYGYGFVDPSAIQQ. One can recognise a Helicase ATP-binding domain in the interval 53–223; sequence ILPIIEGHDV…DKFMNKPVRI (171 aa). An ATP-binding site is contributed by 66 to 73; that stretch reads AQSGTGKT. The DEAD box signature appears at 171–174; it reads DEAD. The 162-residue stretch at 234–395 folds into the Helicase C-terminal domain; the sequence is GIQQYYINVE…ELPANIADLF (162 aa).

This sequence belongs to the DEAD box helicase family. eIF4A subfamily. Component of the eIF4F complex, which composition varies with external and internal environmental conditions. It is composed of at least eIF4A, eIF4E and eIF4G.

The protein resides in the cytoplasm. It carries out the reaction ATP + H2O = ADP + phosphate + H(+). ATP-dependent RNA helicase which is a subunit of the eIF4F complex involved in cap recognition and is required for mRNA binding to ribosome. In the current model of translation initiation, eIF4A unwinds RNA secondary structures in the 5'-UTR of mRNAs which is necessary to allow efficient binding of the small ribosomal subunit, and subsequent scanning for the initiator codon. The polypeptide is ATP-dependent RNA helicase eIF4A (TIF1) (Eremothecium gossypii (strain ATCC 10895 / CBS 109.51 / FGSC 9923 / NRRL Y-1056) (Yeast)).